The primary structure comprises 486 residues: Ribosomal RNA small subunit methyltransferase F (486 aa).

S-adenosyl-L-methionine-binding positions include 124 to 130, glutamate 148, aspartate 175, and aspartate 193; that span reads ASAPGSK. Cysteine 246 acts as the Nucleophile in catalysis.

It belongs to the class I-like SAM-binding methyltransferase superfamily. RsmB/NOP family.

It localises to the cytoplasm. It carries out the reaction cytidine(1407) in 16S rRNA + S-adenosyl-L-methionine = 5-methylcytidine(1407) in 16S rRNA + S-adenosyl-L-homocysteine + H(+). Functionally, specifically methylates the cytosine at position 1407 (m5C1407) of 16S rRNA. The sequence is that of Ribosomal RNA small subunit methyltransferase F from Shewanella baltica (strain OS155 / ATCC BAA-1091).